The chain runs to 147 residues: UPF0306 protein YhbP (147 aa).

Belongs to the UPF0306 family.

In Shigella dysenteriae serotype 1 (strain Sd197), this protein is UPF0306 protein YhbP.